Here is a 533-residue protein sequence, read N- to C-terminus: Chromosomal replication initiator protein DnaA (533 aa).

Residues 1-72 are domain I, interacts with DnaA modulators; that stretch reads MNDFWQHCSA…DLARDFWNAP (72 aa). The domain II stretch occupies residues 72–196; sequence PIEVQFVLDP…EAADSMYERS (125 aa). The interval 83-110 is disordered; that stretch reads AGQRSPAGATPLAPRAPLPSANPAPVGP. The span at 96–110 shows a compositional bias: pro residues; sequence PRAPLPSANPAPVGP. The segment at 197 to 413 is domain III, AAA+ region; sequence KLNPVLTFDN…GALRKILAYS (217 aa). Residues glycine 241, glycine 243, lysine 244, and threonine 245 each coordinate ATP. The segment at 414 to 533 is domain IV, binds dsDNA; sequence KFHGREITIE…LHVLEQTLKG (120 aa).

Belongs to the DnaA family. Oligomerizes as a right-handed, spiral filament on DNA at oriC.

Its subcellular location is the cytoplasm. Functionally, plays an essential role in the initiation and regulation of chromosomal replication. ATP-DnaA binds to the origin of replication (oriC) to initiate formation of the DNA replication initiation complex once per cell cycle. Binds the DnaA box (a 9 base pair repeat at the origin) and separates the double-stranded (ds)DNA. Forms a right-handed helical filament on oriC DNA; dsDNA binds to the exterior of the filament while single-stranded (ss)DNA is stabiized in the filament's interior. The ATP-DnaA-oriC complex binds and stabilizes one strand of the AT-rich DNA unwinding element (DUE), permitting loading of DNA polymerase. After initiation quickly degrades to an ADP-DnaA complex that is not apt for DNA replication. Binds acidic phospholipids. This is Chromosomal replication initiator protein DnaA from Burkholderia mallei (strain NCTC 10247).